A 219-amino-acid polypeptide reads, in one-letter code: Zinc finger C2HC domain-containing protein 1B (219 aa).

2 consecutive C2HC/C3H-type zinc fingers follow at residues 14–43 and 117–146; these read ELFPCEVCGRRFAADVLERHGPICRKLFNK and DYIQCPYCKRRFNETAASRHINFCKDQESR. Zn(2+) is bound by residues Cys18, Cys21, His33, Cys37, Cys121, Cys124, His136, and Cys140. The interval 190–219 is disordered; the sequence is EASAAPTRPAVDPASGAKLRQGFAKSSKKD.

It belongs to the ZC2HC1 family. It depends on Zn(2+) as a cofactor.

The protein is Zinc finger C2HC domain-containing protein 1B (ZC2HC1B) of Bos taurus (Bovine).